A 352-amino-acid chain; its full sequence is MTIFSIRSQIIIGVISSVILTTIILVIAYKLMWFNGHMTLTLAITTMITSCLTLSICSIFINPLIQKIKQFNIKTKQFINHEKFIDDETFQSPREIKELNDSFNKMAYEINNQMNMIKNEQQEKTEIIQNLAHDLKTPLAGIRSYSEGLRDGVISDPQEVHEAYEILIKQANRLSILFDDITHVINLNTGRSYPLELIQLDQLLVNILQPYEQHIKQENRTLEVNFCTDIDAFYQYRPPIERILTNLLDNALKFSNSGSRIDIIISECKENDVISISIKDEGIGIVPELQSRIFERTFRVEDSRNTKTGGSGLGLYIANELAQQIDASITVQSDLDIGTTMTLTLKKFQFKK.

Helical transmembrane passes span 9–29 (QIII…VIAY) and 41–61 (TLAI…SIFI). The region spanning 130 to 349 (NLAHDLKTPL…TMTLTLKKFQ (220 aa)) is the Histidine kinase domain. Phosphohistidine; by autocatalysis is present on His-133.

Post-translationally, autophosphorylated.

It is found in the cell membrane. The enzyme catalyses ATP + protein L-histidine = ADP + protein N-phospho-L-histidine.. Its function is as follows. Member of the two-component regulatory system SaeR/SaeS. Probably functions as a membrane-associated protein kinase that upon sensing the appropriate signal, autophosphorylates and in turn activates the cytosolic response regulator SaeR. In Staphylococcus epidermidis (strain ATCC 35984 / DSM 28319 / BCRC 17069 / CCUG 31568 / BM 3577 / RP62A), this protein is Histidine protein kinase SaeS (saeS).